A 1105-amino-acid chain; its full sequence is Lysylphosphatidylglycerol biosynthesis bifunctional protein LysX (1105 aa).

Positions 1–603 (MTVTKPRSVQ…LLHHDGSAPD (603 aa)) are phosphatidylglycerol lysyltransferase. 7 consecutive transmembrane segments (helical) span residues 20–40 (VPAA…LASI), 62–82 (FPDT…ALAA), 86–106 (IAWL…AADI), 117–137 (FGEN…VLGY), 154–174 (AVLV…VDLF), 186–203 (YVAN…DLFT), and 208–228 (VFLN…ATIV). The tract at residues 604 to 1105 (VSGLRQSAIA…TLPFPLAKPH (502 aa)) is lysine--tRNA ligase. The Mg(2+) site is built by D1017 and E1024.

This sequence in the N-terminal section; belongs to the LPG synthetase family. In the C-terminal section; belongs to the class-II aminoacyl-tRNA synthetase family. Mg(2+) serves as cofactor.

The protein resides in the cell membrane. It catalyses the reaction tRNA(Lys) + L-lysine + ATP = L-lysyl-tRNA(Lys) + AMP + diphosphate. The enzyme catalyses L-lysyl-tRNA(Lys) + a 1,2-diacyl-sn-glycero-3-phospho-(1'-sn-glycerol) = a 1,2-diacyl-sn-glycero-3-phospho-1'-(3'-O-L-lysyl)-sn-glycerol + tRNA(Lys). In terms of biological role, catalyzes the production of L-lysyl-tRNA(Lys)transfer and the transfer of a lysyl group from L-lysyl-tRNA(Lys) to membrane-bound phosphatidylglycerol (PG), which produces lysylphosphatidylglycerol (LPG), one of the components of the bacterial membrane with a positive net charge. LPG synthesis contributes to the resistance to cationic antimicrobial peptides (CAMPs) and likely protects M.tuberculosis against the CAMPs produced by competiting microorganisms (bacteriocins). In fact, the modification of anionic phosphatidylglycerol with positively charged L-lysine results in repulsion of the peptides. This Mycobacterium ulcerans (strain Agy99) protein is Lysylphosphatidylglycerol biosynthesis bifunctional protein LysX (lysX).